The chain runs to 100 residues: RxLR effector protein Avrblb2 (100 aa).

An N-terminal signal peptide occupies residues 1–22 (MRSFLYGVLAFAVLARSSAVAA). Residues 43-57 (RSLRIEAQEVIQSGR) carry the RxLR-dEER motif. The Calmodulin-binding motif motif lies at 78-82 (RPDIK).

Belongs to the RxLR effector family. In terms of assembly, interacts with the host papain-like cysteine protease C14. Interacts with the host calmodulin.

It is found in the secreted. It localises to the host cell membrane. Functionally, secreted effector that acts as an elicitor of hypersensitive response (HR) specifically on plants carrying defense protein Rpi-blb2. Enhances P.infestans colonization of Nicotiana benthamiana leaves. Interacts with, and subsequently prevents secretion into the apoplast of the host papain-like cysteine protease C14, thus promoting virulence by interfering with the execution of host defenses. Associates with calmodulin at the host plasma membrane to interfere with plant defense-associated calcium signaling in hosts. The polypeptide is RxLR effector protein Avrblb2 (Phytophthora infestans (strain T30-4) (Potato late blight agent)).